The sequence spans 446 residues: Phosphoglucosamine mutase (446 aa).

Serine 102 serves as the catalytic Phosphoserine intermediate. Positions 102, 241, 243, and 245 each coordinate Mg(2+). Serine 102 carries the phosphoserine modification.

This sequence belongs to the phosphohexose mutase family. Requires Mg(2+) as cofactor. In terms of processing, activated by phosphorylation.

It carries out the reaction alpha-D-glucosamine 1-phosphate = D-glucosamine 6-phosphate. In terms of biological role, catalyzes the conversion of glucosamine-6-phosphate to glucosamine-1-phosphate. The polypeptide is Phosphoglucosamine mutase (Yersinia pseudotuberculosis serotype O:1b (strain IP 31758)).